We begin with the raw amino-acid sequence, 575 residues long: MLSARCLKSIYFKRSFSQLGHIKPPKHIRNEPVKPFRNIDLKDWDLLRASLMKFKSSSLEVPLVINGERIYDNNERALFPQTNPANHQQVLANVTQATEKDVMNAVKAAKDAKKDWYNLPFYDRSAIFLKAADLISTKYRYDMLAATMLGQGKNVYQAEIDCITELSDFFRYYVKYASDLYAQQPVESADGTWNKAEYRPLEGFVYAVSPFNFTAIAANLIGAPALMGNTVVWKPSQTAALSNYLLMTVLEEAGLPKGVINFIPGDPVQVTDQVLADKDFGALHFTGSTNVFKSLYGKIQSGVVEGKYRDYPRIIGETGGKNFHLVHPSANISHAVLSTIRGTFEFQGQKCSAASRLYLPESKSEEFLSDMFGILQSQNVVPMNTSASPISGGNLRGFMGPVIHEQSFDKLVKVIEDAKKDPELEILYGGQYDKSQGWFVGPTVIKAKRPDHPYMSTEFFGPILTVYEYPDTEFNEICDIIDNTSQYALTGAIFAKDRKAIEYADEKLKFSAGNFYINDKCTGAVVSQQWFGGARMSGTDDKAGGPNILSRFVSIRNTKENFYELTDFKYPSNYE.

297–302 (GKIQSG) is an NAD(+) binding site. Residue Glu317 is the Proton acceptor of the active site. Residue Cys351 is the Nucleophile of the active site.

The protein belongs to the aldehyde dehydrogenase family.

It is found in the mitochondrion inner membrane. The catalysed reaction is L-glutamate 5-semialdehyde + NAD(+) + H2O = L-glutamate + NADH + 2 H(+). Its pathway is amino-acid degradation; L-proline degradation into L-glutamate; L-glutamate from L-proline: step 2/2. The chain is Delta-1-pyrroline-5-carboxylate dehydrogenase, mitochondrial (PUT2) from Saccharomyces cerevisiae (strain ATCC 204508 / S288c) (Baker's yeast).